Here is a 751-residue protein sequence, read N- to C-terminus: Translation initiation factor IF-2, chloroplastic (751 aa).

The tract at residues 86–156 is disordered; that stretch reads KKEKSKFRKD…KSKKQTSAKN (71 aa). The span at 93-106 shows a compositional bias: basic and acidic residues; the sequence is RKDEDYDSLKREDN. Residues 129–143 are compositionally biased toward low complexity; that stretch reads VSNTNTLNKKNVVKS. Positions 250–423 constitute a tr-type G domain; that stretch reads KRPPVIAIMG…ILVSEIEDLK (174 aa). The interval 259 to 266 is G1; that stretch reads GHVDHGKT. 259 to 266 lines the GTP pocket; that stretch reads GHVDHGKT. Positions 284 to 288 are G2; it reads GITQK. A G3 region spans residues 309–312; the sequence is DTPG. Residues 309 to 313 and 363 to 366 each bind GTP; these read DTPGH and NKID. The tract at residues 363 to 366 is G4; sequence NKID. The tract at residues 399–401 is G5; that stretch reads SAM.

The protein belongs to the TRAFAC class translation factor GTPase superfamily. Classic translation factor GTPase family. IF-2 subfamily.

The protein localises to the plastid. It is found in the chloroplast. Its function is as follows. One of the essential components for the initiation of protein synthesis. Protects formylmethionyl-tRNA from spontaneous hydrolysis and promotes its binding to the 30S ribosomal subunits. Also involved in the hydrolysis of GTP during the formation of the 70S ribosomal complex. This Rhodomonas salina (Cryptomonas salina) protein is Translation initiation factor IF-2, chloroplastic (infB).